The sequence spans 396 residues: 1-deoxy-D-xylulose 5-phosphate reductoisomerase (396 aa).

The NADPH site is built by Thr-13, Gly-14, Ser-15, Ile-16, and Asn-127. A 1-deoxy-D-xylulose 5-phosphate-binding site is contributed by Lys-128. Glu-129 is an NADPH binding site. Asp-153 provides a ligand contact to Mn(2+). 1-deoxy-D-xylulose 5-phosphate-binding residues include Ser-154, Glu-155, Ser-184, and His-207. Glu-155 contacts Mn(2+). Gly-213 is a binding site for NADPH. Residues Ser-220, Asn-225, Lys-226, and Glu-229 each contribute to the 1-deoxy-D-xylulose 5-phosphate site. A Mn(2+)-binding site is contributed by Glu-229.

The protein belongs to the DXR family. Mg(2+) serves as cofactor. Requires Mn(2+) as cofactor.

The enzyme catalyses 2-C-methyl-D-erythritol 4-phosphate + NADP(+) = 1-deoxy-D-xylulose 5-phosphate + NADPH + H(+). It participates in isoprenoid biosynthesis; isopentenyl diphosphate biosynthesis via DXP pathway; isopentenyl diphosphate from 1-deoxy-D-xylulose 5-phosphate: step 1/6. Its function is as follows. Catalyzes the NADPH-dependent rearrangement and reduction of 1-deoxy-D-xylulose-5-phosphate (DXP) to 2-C-methyl-D-erythritol 4-phosphate (MEP). This Pseudomonas aeruginosa (strain UCBPP-PA14) protein is 1-deoxy-D-xylulose 5-phosphate reductoisomerase.